A 61-amino-acid chain; its full sequence is Protein DDR2 (61 aa).

Residues 1–22 (MKVSQVFISAISVFGLATSVNA) form the signal peptide. Residues N24 and N27 are each glycosylated (N-linked (GlcNAc...) asparagine).

It to yeast HOR7.

May play an important role in the response of cells to diverse environmental stresses. The chain is Protein DDR2 (DDR2) from Saccharomyces cerevisiae (strain ATCC 204508 / S288c) (Baker's yeast).